A 390-amino-acid polypeptide reads, in one-letter code: 3,5-dihydroxybiphenyl synthase (390 aa).

Residue C161 is part of the active site.

Belongs to the thiolase-like superfamily. Chalcone/stilbene synthases family. As to quaternary structure, homodimer.

It carries out the reaction benzoyl-CoA + 3 malonyl-CoA + 3 H(+) = biphenyl-3,5-diol + 4 CO2 + 4 CoA. Functionally, type III polyketide synthase involved in the biosynthesis of the phytoalexins bisphenyls and dibenzofurans. Can also use salicoyl-CoA and malonyl-CoA to produce a diketide intermediate yielding 4-hydroxycoumarin after cyclization and enolization. Can also use m-hydroxybenzoyl-CoA as substrate, producing m-hydroxybenzoyl diacetic acid lactone as a derailment product. No activity with p-hydroxybenzoyl-CoA, CoA-linked cinnamic acids or acetyl-CoA. This is 3,5-dihydroxybiphenyl synthase (BIS1) from Sorbus aucuparia (European mountain ash).